Reading from the N-terminus, the 666-residue chain is Probable potassium transport system protein Kup (666 aa).

The next 12 helical transmembrane spans lie at 16–36 (GFIIALGIVYGDIGTSPLYTM), 58–78 (ISLIIWTLTLITTIKYVLVAL), 99–119 (TPWLIVPAVIGGATLLSDGAL), 141–161 (IFQNQSNVIFATLFILLLLFA), 167–187 (TGVIGKLFGPIMFIWFAFLGI), 221–241 (IFILGSIFLATTGAEALYSDL), 253–273 (WPFVKVAIILSYCGQGAWILA), 292–312 (FTMHVVILATLAAIIASQALI), 343–363 (TYIPVINWFLFAITTSIVLLF), 373–393 (YGLAITITMLMTTILLSFFLI), 402–422 (VLLMMIFFGILEGIFFLASAV), and 424–444 (FMHGGYVVVIIAVAIIFIMTI).

The protein belongs to the HAK/KUP transporter (TC 2.A.72) family.

It is found in the cell membrane. It carries out the reaction K(+)(in) + H(+)(in) = K(+)(out) + H(+)(out). Its function is as follows. Transport of potassium into the cell. Likely operates as a K(+):H(+) symporter. The protein is Probable potassium transport system protein Kup of Streptococcus agalactiae serotype Ia (strain ATCC 27591 / A909 / CDC SS700).